The sequence spans 210 residues: Beta-crystallin A4 (210 aa).

The N-terminal arm stretch occupies residues 1–25 (MSGMFSGSISETSGMSLQCTKSAGH). 2 Beta/gamma crystallin 'Greek key' domains span residues 26–65 (WKIV…KVLS) and 66–112 (GAWV…RPVA). A connecting peptide region spans residues 113–118 (CANHRD). 2 consecutive Beta/gamma crystallin 'Greek key' domains span residues 119-160 (SRLT…HVHS) and 161-209 (GAWV…RRIQ).

It belongs to the beta/gamma-crystallin family. Homo/heterodimer, or complexes of higher-order. The structure of beta-crystallin oligomers seems to be stabilized through interactions between the N-terminal arms.

Crystallins are the dominant structural components of the vertebrate eye lens. This is Beta-crystallin A4 (CRYBA4) from Bos taurus (Bovine).